A 420-amino-acid polypeptide reads, in one-letter code: UDP-N-acetylglucosamine 1-carboxyvinyltransferase (420 aa).

22–23 contributes to the phosphoenolpyruvate binding site; sequence KN. Arginine 92 contacts UDP-N-acetyl-alpha-D-glucosamine. Catalysis depends on cysteine 116, which acts as the Proton donor. Position 116 is a 2-(S-cysteinyl)pyruvic acid O-phosphothioketal (cysteine 116). Residues 121 to 125, 161 to 164, aspartate 306, and isoleucine 328 each bind UDP-N-acetyl-alpha-D-glucosamine; these read RPVDL and KVSV.

It belongs to the EPSP synthase family. MurA subfamily.

The protein localises to the cytoplasm. It carries out the reaction phosphoenolpyruvate + UDP-N-acetyl-alpha-D-glucosamine = UDP-N-acetyl-3-O-(1-carboxyvinyl)-alpha-D-glucosamine + phosphate. It functions in the pathway cell wall biogenesis; peptidoglycan biosynthesis. In terms of biological role, cell wall formation. Adds enolpyruvyl to UDP-N-acetylglucosamine. In Yersinia pseudotuberculosis serotype O:1b (strain IP 31758), this protein is UDP-N-acetylglucosamine 1-carboxyvinyltransferase.